Here is a 276-residue protein sequence, read N- to C-terminus: Undecaprenyl-diphosphatase 2 (276 aa).

The next 8 helical transmembrane spans lie at 1–21, 44–64, 87–107, 114–134, 150–170, 190–210, 222–242, and 251–271; these read MSLWFLVFLSVLQGVTELFPV, QLLPFLVALHLGTALALLWYF, GHLMWALIIGTIPTGIVGLLL, VFHDLRIVAIALIVNGVLLWL, MTFKQAFFVGLAQIGALIPGF, AAEFSFLLGTPIIFAAGVLEL, DALLGGVLTAIAAYLSVRFLM, and LASFGVYCVIAGVFCLGWFML.

Belongs to the UppP family.

The protein resides in the cell inner membrane. It carries out the reaction di-trans,octa-cis-undecaprenyl diphosphate + H2O = di-trans,octa-cis-undecaprenyl phosphate + phosphate + H(+). In terms of biological role, catalyzes the dephosphorylation of undecaprenyl diphosphate (UPP). Confers resistance to bacitracin. In Burkholderia orbicola (strain AU 1054), this protein is Undecaprenyl-diphosphatase 2.